The sequence spans 205 residues: Large ribosomal subunit protein uL18 (205 aa).

This sequence belongs to the universal ribosomal protein uL18 family. Part of the 50S ribosomal subunit. Contacts the 5S and 23S rRNAs.

Functionally, this is one of the proteins that bind and probably mediate the attachment of the 5S RNA into the large ribosomal subunit, where it forms part of the central protuberance. In Pyrobaculum aerophilum (strain ATCC 51768 / DSM 7523 / JCM 9630 / CIP 104966 / NBRC 100827 / IM2), this protein is Large ribosomal subunit protein uL18.